Here is a 270-residue protein sequence, read N- to C-terminus: Phosphate import ATP-binding protein PstB 2 (270 aa).

The 241-residue stretch at 25-265 (LQAKDINIYY…PEKKQTEDYI (241 aa)) folds into the ABC transporter domain. 57–64 (GPSGCGKS) is an ATP binding site.

This sequence belongs to the ABC transporter superfamily. Phosphate importer (TC 3.A.1.7) family. The complex is composed of two ATP-binding proteins (PstB), two transmembrane proteins (PstC and PstA) and a solute-binding protein (PstS).

It is found in the cell membrane. The enzyme catalyses phosphate(out) + ATP + H2O = ADP + 2 phosphate(in) + H(+). Its function is as follows. Part of the ABC transporter complex PstSACB involved in phosphate import. Responsible for energy coupling to the transport system. The protein is Phosphate import ATP-binding protein PstB 2 of Shouchella clausii (strain KSM-K16) (Alkalihalobacillus clausii).